The primary structure comprises 910 residues: Aconitate hydratase A (910 aa).

[4Fe-4S] cluster is bound by residues Cys454, Cys520, and Cys523.

Belongs to the aconitase/IPM isomerase family. As to quaternary structure, monomer. The cofactor is [4Fe-4S] cluster.

The catalysed reaction is citrate = D-threo-isocitrate. The enzyme catalyses (2S,3R)-3-hydroxybutane-1,2,3-tricarboxylate = 2-methyl-cis-aconitate + H2O. It participates in carbohydrate metabolism; tricarboxylic acid cycle; isocitrate from oxaloacetate: step 2/2. Its pathway is organic acid metabolism; propanoate degradation. Its function is as follows. Involved in the catabolism of short chain fatty acids (SCFA) via the tricarboxylic acid (TCA)(acetyl degradation route) and probably the 2-methylcitrate cycle I (propionate degradation route). Catalyzes the reversible isomerization of citrate to isocitrate via cis-aconitate. Could catalyze the hydration of 2-methyl-cis-aconitate to yield (2R,3S)-2-methylisocitrate. The apo form of AcnA functions as a RNA-binding regulatory protein. In Pseudomonas aeruginosa (strain ATCC 15692 / DSM 22644 / CIP 104116 / JCM 14847 / LMG 12228 / 1C / PRS 101 / PAO1), this protein is Aconitate hydratase A (acnA).